The primary structure comprises 341 residues: Methionine import ATP-binding protein MetN (341 aa).

The ABC transporter domain maps to 6-247 (IEIKKLSKNF…PQHQATRHLL (242 aa)). ATP is bound at residue 44 to 51 (GMSGAGKS).

Belongs to the ABC transporter superfamily. Methionine importer (TC 3.A.1.24) family. As to quaternary structure, the complex is composed of two ATP-binding proteins (MetN), two transmembrane proteins (MetI) and a solute-binding protein (MetQ).

It localises to the cell inner membrane. It catalyses the reaction L-methionine(out) + ATP + H2O = L-methionine(in) + ADP + phosphate + H(+). The enzyme catalyses D-methionine(out) + ATP + H2O = D-methionine(in) + ADP + phosphate + H(+). Part of the ABC transporter complex MetNIQ involved in methionine import. Responsible for energy coupling to the transport system. This chain is Methionine import ATP-binding protein MetN, found in Protochlamydia amoebophila (strain UWE25).